Reading from the N-terminus, the 270-residue chain is Small ribosomal subunit protein eS1 (270 aa).

The segment at 235–270 is disordered; that stretch reads GTSKGGAASTAAVAKGEEGVKVDRPEGYEPPVLETV. Residues 239 to 248 show a composition bias toward low complexity; sequence GGAASTAAVA. Basic and acidic residues predominate over residues 249–261; it reads KGEEGVKVDRPEG.

It belongs to the eukaryotic ribosomal protein eS1 family. As to quaternary structure, component of the small ribosomal subunit. Mature ribosomes consist of a small (40S) and a large (60S) subunit. The 40S subunit contains about 33 different proteins and 1 molecule of RNA (18S). The 60S subunit contains about 49 different proteins and 3 molecules of RNA (28S, 5.8S and 5S).

The protein resides in the cytoplasm. In Ixodes scapularis (Black-legged tick), this protein is Small ribosomal subunit protein eS1.